A 173-amino-acid chain; its full sequence is NAD(P)H-quinone oxidoreductase subunit I, chloroplastic (173 aa).

4Fe-4S ferredoxin-type domains are found at residues 55-84 (GRIH…VDWD) and 95-124 (RSYS…MTEE). The [4Fe-4S] cluster site is built by C64, C67, C70, C74, C104, C107, C110, and C114.

The protein belongs to the complex I 23 kDa subunit family. In terms of assembly, NDH is composed of at least 16 different subunits, 5 of which are encoded in the nucleus. It depends on [4Fe-4S] cluster as a cofactor.

Its subcellular location is the plastid. It localises to the chloroplast thylakoid membrane. The catalysed reaction is a plastoquinone + NADH + (n+1) H(+)(in) = a plastoquinol + NAD(+) + n H(+)(out). The enzyme catalyses a plastoquinone + NADPH + (n+1) H(+)(in) = a plastoquinol + NADP(+) + n H(+)(out). Functionally, NDH shuttles electrons from NAD(P)H:plastoquinone, via FMN and iron-sulfur (Fe-S) centers, to quinones in the photosynthetic chain and possibly in a chloroplast respiratory chain. The immediate electron acceptor for the enzyme in this species is believed to be plastoquinone. Couples the redox reaction to proton translocation, and thus conserves the redox energy in a proton gradient. In Nephroselmis olivacea (Green alga), this protein is NAD(P)H-quinone oxidoreductase subunit I, chloroplastic.